The primary structure comprises 342 residues: S-adenosylmethionine:tRNA ribosyltransferase-isomerase (342 aa).

Belongs to the QueA family. In terms of assembly, monomer.

The protein localises to the cytoplasm. It catalyses the reaction 7-aminomethyl-7-carbaguanosine(34) in tRNA + S-adenosyl-L-methionine = epoxyqueuosine(34) in tRNA + adenine + L-methionine + 2 H(+). Its pathway is tRNA modification; tRNA-queuosine biosynthesis. Its function is as follows. Transfers and isomerizes the ribose moiety from AdoMet to the 7-aminomethyl group of 7-deazaguanine (preQ1-tRNA) to give epoxyqueuosine (oQ-tRNA). The chain is S-adenosylmethionine:tRNA ribosyltransferase-isomerase from Geobacillus sp. (strain WCH70).